Reading from the N-terminus, the 377-residue chain is Probable O-methyltransferase 3 (377 aa).

Aspartate 241 contacts S-adenosyl-L-methionine. Histidine 279 acts as the Proton acceptor in catalysis.

The protein belongs to the class I-like SAM-binding methyltransferase superfamily. Cation-independent O-methyltransferase family. As to expression, highly expressed in lupulin glands. Detected in early-, mid- and late-stage cones.

This Humulus lupulus (European hop) protein is Probable O-methyltransferase 3.